A 217-amino-acid chain; its full sequence is D-methionine transport system permease protein MetI (217 aa).

The region spanning 13 to 204 (VWETLMMTFV…LLVILVYLIQ (192 aa)) is the ABC transmembrane type-1 domain. A run of 5 helical transmembrane segments spans residues 20–40 (TFVS…LLYV), 58–78 (GVVN…MIPF), 81–101 (MIVG…VGAA), 152–172 (ITLI…AGGL), and 186–206 (ATVM…IQLS).

The protein belongs to the binding-protein-dependent transport system permease family. CysTW subfamily.

It is found in the cell inner membrane. In terms of biological role, part of the binding-protein-dependent transport system for D-methionine and the toxic methionine analog alpha-methyl-methionine. Probably responsible for the translocation of the substrate across the membrane. The polypeptide is D-methionine transport system permease protein MetI (metI) (Yersinia pestis).